A 93-amino-acid chain; its full sequence is Protein LSO1 (93 aa).

The interval 1–73 is disordered; sequence MHNTGKRYSE…TEKLRAKKER (73 aa). Residues 20-83 are a coiled coil; it reads ARKRRQAYEK…DQLLAAEEEA (64 aa). Basic and acidic residues-rich tracts occupy residues 25 to 49 and 57 to 73; these read QAYEKDQLEKQQLEAQEAQRWEEGA and LIMEQKKTEKLRAKKER.

It is found in the nucleus. It localises to the cytoplasm. Functionally, likely to play a role in iron homeostasis. The sequence is that of Protein LSO1 from Saccharomyces cerevisiae (strain ATCC 204508 / S288c) (Baker's yeast).